The sequence spans 517 residues: Ribose import ATP-binding protein RbsA 1 (517 aa).

ABC transporter domains are found at residues 11-251 and 263-507; these read LEMR…VGRD and YDPG…ALAT. 43 to 50 provides a ligand contact to ATP; sequence GENGAGKS.

The protein belongs to the ABC transporter superfamily. Ribose importer (TC 3.A.1.2.1) family. In terms of assembly, the complex is composed of an ATP-binding protein (RbsA), two transmembrane proteins (RbsC) and a solute-binding protein (RbsB).

The protein resides in the cell inner membrane. The catalysed reaction is D-ribose(out) + ATP + H2O = D-ribose(in) + ADP + phosphate + H(+). Functionally, part of the ABC transporter complex RbsABC involved in ribose import. Responsible for energy coupling to the transport system. In Burkholderia cenocepacia (strain HI2424), this protein is Ribose import ATP-binding protein RbsA 1.